Consider the following 321-residue polypeptide: Methionine import ATP-binding protein MetN (321 aa).

The ABC transporter domain occupies 2-237 (ISIKNVNKYY…NTKGLRKLIG (236 aa)). 34–41 (GHSGAGKS) lines the ATP pocket.

Belongs to the ABC transporter superfamily. Methionine importer (TC 3.A.1.24) family. As to quaternary structure, the complex is composed of two ATP-binding proteins (MetN), two transmembrane proteins (MetI) and a solute-binding protein (MetQ).

The protein localises to the cell membrane. The catalysed reaction is L-methionine(out) + ATP + H2O = L-methionine(in) + ADP + phosphate + H(+). It carries out the reaction D-methionine(out) + ATP + H2O = D-methionine(in) + ADP + phosphate + H(+). Part of the ABC transporter complex MetNIQ involved in methionine import. Responsible for energy coupling to the transport system. This chain is Methionine import ATP-binding protein MetN, found in Clostridioides difficile (strain 630) (Peptoclostridium difficile).